We begin with the raw amino-acid sequence, 358 residues long: Presenilin hop-1 (358 aa).

Residues 1–12 (MPRTKRVYSGKT) are Cytoplasmic-facing. A helical membrane pass occupies residues 13–33 (ITGVLYPVAICMLFVAINVKL). The Lumenal portion of the chain corresponds to 34 to 57 (SQPEQQEQSKVVYGLFHSYDTADS). A helical transmembrane segment spans residues 58 to 78 (GTITLYLIGFLILTTSLGVFC). Residues 79 to 86 (YQMKFYKA) are Cytoplasmic-facing. The chain crosses the membrane as a helical span at residues 87–107 (IKVYVLANSIGILLVYSVFHF). The Lumenal segment spans residues 108–115 (QRIAEAQS). A helical transmembrane segment spans residues 116–136 (IPVSVPTFFFLILQFGGLGIT). Over 137–148 (CLHWKSHRRLHQ) the chain is Cytoplasmic. A helical transmembrane segment spans residues 149-169 (FYLIMLAGLTAIFILNILPDW). Residue Thr170 is a topological domain, lumenal. Residues 171–191 (VWMALTAISFWDIVAVLTPCG) form a helical membrane-spanning segment. Asp182 is a catalytic residue. Topologically, residues 192–273 (PLKMLVETAN…EVREVEGTIR (82 aa)) are cytoplasmic. The segment covering 221-240 (EVDSPDTTRSNSTPLTEFNN) has biased composition (polar residues). Residues 221 to 242 (EVDSPDTTRSNSTPLTEFNNSS) are disordered. Residues 274-294 (LGMGDFVFYSLMLGNTVQTCP) form a helical membrane-spanning segment. Residue Asp278 is part of the active site. Topologically, residues 295-297 (LPT) are lumenal. The helical transmembrane segment at 298-318 (VVACFVSNLVGLTITLPIVTL) threads the bilayer. At 319–321 (SQT) the chain is on the cytoplasmic side. An intramembrane region (helical) is located at residues 322 to 342 (ALPALPFPLAIAAIFYFSSHI). Residues 324 to 326 (PAL) carry the PAL motif. Over 343-358 (ALTPFTDLCTSQLILI) the chain is Cytoplasmic.

The protein belongs to the peptidase A22A family. In terms of assembly, homodimer. Component of the gamma-secretase complex, a complex probably composed of the presenilin homodimer (sel-12, hop-1 or spe-4), nicastrin (aph-2), aph-1 and pen-2. Weakly expressed.

It is found in the endoplasmic reticulum membrane. Its subcellular location is the golgi apparatus membrane. Probable catalytic subunit of the gamma-secretase complex, an endoprotease complex that catalyzes the intramembrane cleavage of integral membrane proteins such as Notch receptors (lin-12 or glp-1). Probably works redundantly of lin-12, which provides more presenilin function. The sequence is that of Presenilin hop-1 (hop-1) from Caenorhabditis elegans.